Reading from the N-terminus, the 219-residue chain is uncharacterized protein (219 aa).

A compositionally biased stretch (low complexity) spans 1 to 17 (MIINNQNSPQSINTPSS). Residues 1–31 (MIINNQNSPQSINTPSSVSSRQHINKSKKKK) form a disordered region. Helical transmembrane passes span 49–69 (SLAT…LVCK) and 83–105 (LVYR…SYIG). Residues 135–219 (NHRSPIPLTN…NSDLEIPIPI (85 aa)) form a disordered region. The span at 144–212 (NLNNNNNNNN…SNNNNDNNSD (69 aa)) shows a compositional bias: low complexity.

Its subcellular location is the membrane. This is an uncharacterized protein from Dictyostelium discoideum (Social amoeba).